The primary structure comprises 235 residues: Small ribosomal subunit protein uS3 (235 aa).

The KH type-2 domain occupies 39-107 (VRKFLNKELA…PAQINIAEVK (69 aa)). Residues 215–235 (AQPEQQPADKPKKAPRGKGRK) form a disordered region.

The protein belongs to the universal ribosomal protein uS3 family. In terms of assembly, part of the 30S ribosomal subunit. Forms a tight complex with proteins S10 and S14.

In terms of biological role, binds the lower part of the 30S subunit head. Binds mRNA in the 70S ribosome, positioning it for translation. The chain is Small ribosomal subunit protein uS3 from Pasteurella multocida (strain Pm70).